The sequence spans 269 residues: Protein LNK3 (269 aa).

In terms of assembly, interacts with REV8.

Its function is as follows. Probable transcriptional coactivator. This is Protein LNK3 from Arabidopsis thaliana (Mouse-ear cress).